The sequence spans 102 residues: Small ribosomal subunit protein eS24 (102 aa).

The interval Val70–Glu102 is disordered. A compositionally biased stretch (basic and acidic residues) spans Glu79–Ala93.

Belongs to the eukaryotic ribosomal protein eS24 family.

This is Small ribosomal subunit protein eS24 from Halobacterium salinarum (strain ATCC 29341 / DSM 671 / R1).